A 332-amino-acid polypeptide reads, in one-letter code: Agamous-like MADS-box protein AGL66 (332 aa).

The MADS-box domain maps to 1-61 (MGRVKLEIKR…DRLSLFSGKT (61 aa)). Residues 120-151 (TAINSDVEELEHEVYKLQQQLLMAEEELRKYE) are a coiled coil.

As to quaternary structure, forms a heterodimer with AGL30. As to expression, expressed in pollen.

The protein resides in the nucleus. Its function is as follows. Probable transcription factor that forms a heterodimer with the MADS-box protein AGL30 and is involved in the regulation of pollen maturation at the late stages of pollen development and pollen tube growth. In Arabidopsis thaliana (Mouse-ear cress), this protein is Agamous-like MADS-box protein AGL66.